The primary structure comprises 263 residues: Acetylglutamate kinase (263 aa).

Substrate-binding positions include 48–49, Arg70, and Asn162; that span reads GG.

It belongs to the acetylglutamate kinase family. ArgB subfamily.

The protein localises to the cytoplasm. The catalysed reaction is N-acetyl-L-glutamate + ATP = N-acetyl-L-glutamyl 5-phosphate + ADP. It functions in the pathway amino-acid biosynthesis; L-arginine biosynthesis; N(2)-acetyl-L-ornithine from L-glutamate: step 2/4. Functionally, catalyzes the ATP-dependent phosphorylation of N-acetyl-L-glutamate. The protein is Acetylglutamate kinase of Vibrio vulnificus (strain CMCP6).